The chain runs to 157 residues: Endoribonuclease YbeY (157 aa).

His-116, His-120, and His-126 together coordinate Zn(2+).

Belongs to the endoribonuclease YbeY family. Zn(2+) is required as a cofactor.

Its subcellular location is the cytoplasm. Functionally, single strand-specific metallo-endoribonuclease involved in late-stage 70S ribosome quality control and in maturation of the 3' terminus of the 16S rRNA. This is Endoribonuclease YbeY from Renibacterium salmoninarum (strain ATCC 33209 / DSM 20767 / JCM 11484 / NBRC 15589 / NCIMB 2235).